The sequence spans 303 residues: Dihydroorotate dehydrogenase B (NAD(+)), catalytic subunit (303 aa).

Residues Lys46, 70–74 (NAIGL), and Asn124 contribute to the substrate site. 46-47 (KS) is an FMN binding site. Asn124 lines the FMN pocket. Cys127 functions as the Nucleophile in the catalytic mechanism. Residues Lys163 and Ile189 each contribute to the FMN site. 190–191 (NS) provides a ligand contact to substrate. Residues Gly216, 242–243 (GG), and 264–265 (GT) contribute to the FMN site.

Belongs to the dihydroorotate dehydrogenase family. Type 1 subfamily. As to quaternary structure, heterotetramer of 2 PyrK and 2 PyrD type B subunits. FMN serves as cofactor.

The protein resides in the cytoplasm. The catalysed reaction is (S)-dihydroorotate + NAD(+) = orotate + NADH + H(+). It functions in the pathway pyrimidine metabolism; UMP biosynthesis via de novo pathway; orotate from (S)-dihydroorotate (NAD(+) route): step 1/1. In terms of biological role, catalyzes the conversion of dihydroorotate to orotate with NAD(+) as electron acceptor. This is Dihydroorotate dehydrogenase B (NAD(+)), catalytic subunit (pyrD) from Methanothermobacter thermautotrophicus (strain ATCC 29096 / DSM 1053 / JCM 10044 / NBRC 100330 / Delta H) (Methanobacterium thermoautotrophicum).